The sequence spans 119 residues: MTAVEIIISIFVLIGGFLSLLGSIGIIRFPDVYGRLHAATKSATLGVISIMLATFLFFFLVHGEFVGKLLLTILFVFLTAPVAGMMMGRSAYRVGVPLWEKSTQDDLKKMYEKKMKGSN.

3 helical membrane-spanning segments follow: residues 7–29 (IISIFVLIGGFLSLLGSIGIIRF), 44–61 (TLGVISIMLATFLFFFLV), and 66–88 (VGKLLLTILFVFLTAPVAGMMMG).

Belongs to the CPA3 antiporters (TC 2.A.63) subunit G family. In terms of assembly, forms a heterooligomeric complex that consists of seven subunits: MrpA, MrpB, MrpC, MrpD, MrpE, MrpF and MrpG.

The protein resides in the cell membrane. Its function is as follows. Mnh complex is a Na(+)Li(+)/H(+) antiporter involved in Na(+) and/or Li(+) excretion and Na(+) resistance. Na(+)/H(+) antiport consumes a transmembrane electrical potential, and is thus inferred to be electrogenic. Does not transport K(+), Ca(2+) or Mg(2+). This chain is Na(+)/H(+) antiporter subunit G (mrpG), found in Alkalihalophilus pseudofirmus (strain ATCC BAA-2126 / JCM 17055 / OF4) (Bacillus pseudofirmus).